Reading from the N-terminus, the 463-residue chain is ATP-dependent protease ATPase subunit HslU (463 aa).

ATP contacts are provided by residues I19, 61–66 (GVGKTE), D277, E341, and R413.

Belongs to the ClpX chaperone family. HslU subfamily. In terms of assembly, a double ring-shaped homohexamer of HslV is capped on each side by a ring-shaped HslU homohexamer. The assembly of the HslU/HslV complex is dependent on binding of ATP.

It is found in the cytoplasm. Functionally, ATPase subunit of a proteasome-like degradation complex; this subunit has chaperone activity. The binding of ATP and its subsequent hydrolysis by HslU are essential for unfolding of protein substrates subsequently hydrolyzed by HslV. HslU recognizes the N-terminal part of its protein substrates and unfolds these before they are guided to HslV for hydrolysis. In Bacillus anthracis (strain A0248), this protein is ATP-dependent protease ATPase subunit HslU.